A 56-amino-acid polypeptide reads, in one-letter code: uncharacterized protein (56 aa).

2 4Fe-4S ferredoxin-type domains span residues 2 to 28 (VKID…NLIE) and 29 to 56 (HIIV…LEGE). [4Fe-4S] cluster contacts are provided by Cys-9, Cys-12, Cys-15, Cys-19, Cys-38, Cys-41, Cys-44, and Cys-48.

The cofactor is [4Fe-4S] cluster.

Ferredoxins are iron-sulfur proteins that transfer electrons in a wide variety of metabolic reactions. This is an uncharacterized protein from Methanocaldococcus jannaschii (strain ATCC 43067 / DSM 2661 / JAL-1 / JCM 10045 / NBRC 100440) (Methanococcus jannaschii).